A 460-amino-acid polypeptide reads, in one-letter code: Jacalin-related lectin 36 (460 aa).

Residues 1–131 (MAAATMSWDD…LNSIDVHFAP (131 aa)) enclose the Jacalin-type lectin 1 domain. The residue at position 2 (Ala2) is an N-acetylalanine. 3 disordered regions span residues 34–57 (YDGDTHNPHHHGTPGKKSDGVSLS), 133–162 (PSSSSSSSSLSQANKVDAQGGKGGTSWDDG), and 291–334 (SGRG…PHEG). Positions 133–143 (PSSSSSSSSLS) are enriched in low complexity. The Jacalin-type lectin 2 domain occupies 145–289 (ANKVDAQGGK…LNALGAYFAP (145 aa)). Residues 292–309 (GRGTPSATQPPGSAQPTG) are compositionally biased toward polar residues. A Jacalin-type lectin 3 domain is found at 313–457 (AKKLEAKGGN…IHQVGVHVKP (145 aa)).

It belongs to the jacalin lectin family.

This chain is Jacalin-related lectin 36 (JAL36), found in Arabidopsis thaliana (Mouse-ear cress).